We begin with the raw amino-acid sequence, 415 residues long: Dynein assembly factor with WD repeat domains 1 (415 aa).

WD repeat units follow at residues 90 to 129 (AHIL…ELHT), 132 to 172 (GHRN…CFYT), 175 to 214 (GHTA…EVST), 217 to 256 (GHFA…KVHV), 259 to 298 (GHRG…CLAT), 301 to 340 (GHND…CLCQ), 343 to 384 (GHKG…QVLE), and 385 to 415 (GHSD…RIWH).

It belongs to the WD repeat WDR69 family. In terms of tissue distribution, expressed in organs bearing motile cilia, including the pronephros, otic vesicles and Kupffer's vesicle.

The protein localises to the cytoplasm. The protein resides in the cytoskeleton. Its subcellular location is the flagellum basal body. It is found in the flagellum axoneme. Required for axonemal dynein assembly and ciliary motility in ciliated organs, including Kupffer's vesicle, during embryogenesis. Facilitates the onset of robust cilia motility during development. The chain is Dynein assembly factor with WD repeat domains 1 (daw1) from Danio rerio (Zebrafish).